The primary structure comprises 564 residues: Urocanate hydratase (564 aa).

NAD(+) is bound by residues 58–59 (GG), glutamine 136, 182–184 (GMG), glutamate 202, arginine 207, 248–249 (NA), 269–273 (QTSAH), 279–280 (YL), and tyrosine 328. The active site involves cysteine 416. Position 498 (glycine 498) interacts with NAD(+).

It belongs to the urocanase family. Requires NAD(+) as cofactor.

It is found in the cytoplasm. The enzyme catalyses 4-imidazolone-5-propanoate = trans-urocanate + H2O. The protein operates within amino-acid degradation; L-histidine degradation into L-glutamate; N-formimidoyl-L-glutamate from L-histidine: step 2/3. In terms of biological role, catalyzes the conversion of urocanate to 4-imidazolone-5-propionate. The chain is Urocanate hydratase from Aliivibrio salmonicida (strain LFI1238) (Vibrio salmonicida (strain LFI1238)).